Here is a 352-residue protein sequence, read N- to C-terminus: S-adenosylmethionine:tRNA ribosyltransferase-isomerase (352 aa).

The protein belongs to the QueA family. In terms of assembly, monomer.

Its subcellular location is the cytoplasm. The catalysed reaction is 7-aminomethyl-7-carbaguanosine(34) in tRNA + S-adenosyl-L-methionine = epoxyqueuosine(34) in tRNA + adenine + L-methionine + 2 H(+). It functions in the pathway tRNA modification; tRNA-queuosine biosynthesis. In terms of biological role, transfers and isomerizes the ribose moiety from AdoMet to the 7-aminomethyl group of 7-deazaguanine (preQ1-tRNA) to give epoxyqueuosine (oQ-tRNA). The chain is S-adenosylmethionine:tRNA ribosyltransferase-isomerase from Gloeobacter violaceus (strain ATCC 29082 / PCC 7421).